The following is a 1827-amino-acid chain: Phenolphthiocerol/phthiocerol polyketide synthase subunit C (1827 aa).

Residues 35-461 enclose the Ketosynthase family 3 (KS3) domain; it reads CEPVAVVGIG…GTNAHVVVEQ (427 aa). Catalysis depends on for beta-ketoacyl synthase activity residues C207, H342, and H383. Residues 566 to 876 are acyltransferase; that stretch reads VFVYSGQGSQ…LAAVGVAASE (311 aa). S654 (for malonyltransferase activity) is an active-site residue. The tract at residues 910 to 1037 is N-terminal hotdog fold; sequence HPLLGAHIEM…AKVEQSPREC (128 aa). Residues 910–1076 are dehydratase; it reads HPLLGAHIEM…QHHGPAFAAL (167 aa). In terms of domain architecture, PKS/mFAS DH spans 910-1198; sequence HPLLGAHIEM…LRRVERRAVP (289 aa). The active-site Proton acceptor; for dehydratase activity is H942. The interval 1050 to 1198 is C-terminal hotdog fold; it reads GTTVSPADFY…LRRVERRAVP (149 aa). The active-site Proton donor; for dehydratase activity is the D1111. Positions 1439–1617 are beta-ketoacyl reductase; sequence ASYVVTGGLG…VINWGPWSEV (179 aa). Residue 1440-1485 participates in NADP(+) binding; that stretch reads SYVVTGGLGGLGLVVARWLVDRGAGRVVLGGRSDPTDEQCNVLAEL. Residues 1706 to 1785 form the Carrier domain; sequence RAVTERMCAR…DLTADLMRQL (80 aa). Residue S1745 is modified to O-(pantetheine 4'-phosphoryl)serine. Positions 1807–1820 are enriched in basic residues; it reads RAAARHGAAMRRRP. The disordered stretch occupies residues 1807 to 1827; the sequence is RAAARHGAAMRRRPKPEVQGG.

Requires NADP(+) as cofactor. Pantetheine 4'-phosphate serves as cofactor.

It carries out the reaction icosanoyl-[(phenol)carboxyphthiodiolenone synthase] + 2 (S)-methylmalonyl-CoA + 3 malonyl-CoA + 5 NADPH + 10 H(+) = C32-carboxyphthiodiolenone-[(phenol)carboxyphthiodiolenone synthase] + 5 CO2 + 5 NADP(+) + 5 CoA + 2 H2O. The catalysed reaction is docosanoyl-[(phenol)carboxyphthiodiolenone synthase] + 2 (S)-methylmalonyl-CoA + 3 malonyl-CoA + 5 NADPH + 10 H(+) = C34-carboxyphthiodiolenone-[(phenol)carboxyphthiodiolenone synthase] + 5 CO2 + 5 NADP(+) + 5 CoA + 2 H2O. The enzyme catalyses 17-(4-hydroxyphenyl)heptadecanoyl-[(phenol)carboxyphthiodiolenone synthase] + 2 (S)-methylmalonyl-CoA + 3 malonyl-CoA + 5 NADPH + 10 H(+) = C35-(phenol)carboxyphthiodiolenone-[(phenol)carboxyphthiodiolenone synthase] + 5 CO2 + 5 NADP(+) + 5 CoA + 2 H2O. It catalyses the reaction 19-(4-hydroxyphenyl)nonadecanoyl-[(phenol)carboxyphthiodiolenone synthase] + 2 (S)-methylmalonyl-CoA + 3 malonyl-CoA + 5 NADPH + 10 H(+) = C37-(phenol)carboxyphthiodiolenone-[(phenol)carboxyphthiodiolenone synthase] + 5 CO2 + 5 NADP(+) + 5 CoA + 2 H2O. It functions in the pathway lipid metabolism; fatty acid biosynthesis. Part of the PpsABCDE complex involved in the biosynthesis of the lipid core common to phthiocerols and phenolphthiocerols by successive additions of malonyl-CoA or methylmalonyl-CoA extender units. PpsA can accept as substrate the activated forms of either icosanoyl (C20), docosanoyl (C22) or lignoceroyl (C24) groups from FadD26, or a (4-hydroxyphenyl)-C17 or (4-hydroxyphenyl)-C19 fatty acyl from FadD29. PpsA initiates the biosynthesis and extends its substrate using a malonyl-CoA extender unit. The PpsB and PpsC proteins add the second and third malonyl-CoA extender units. PpsD adds an (R)-methylmalonyl unit and PpsE adds a second (R)-methylmalonyl unit. The incorporation of the methylmalonyl units results in formation of two branched methyl groups in the elongated product. This is Phenolphthiocerol/phthiocerol polyketide synthase subunit C (ppsD) from Mycobacterium tuberculosis (strain CDC 1551 / Oshkosh).